A 539-amino-acid polypeptide reads, in one-letter code: Chaperonin GroEL (539 aa).

Residues 29 to 32 (TIGP), 86 to 90 (DGTTT), Gly-413, 476 to 478 (NAA), and Asp-492 contribute to the ATP site.

Belongs to the chaperonin (HSP60) family. As to quaternary structure, forms a cylinder of 14 subunits composed of two heptameric rings stacked back-to-back. Interacts with the co-chaperonin GroES.

The protein resides in the cytoplasm. The catalysed reaction is ATP + H2O + a folded polypeptide = ADP + phosphate + an unfolded polypeptide.. Functionally, together with its co-chaperonin GroES, plays an essential role in assisting protein folding. The GroEL-GroES system forms a nano-cage that allows encapsulation of the non-native substrate proteins and provides a physical environment optimized to promote and accelerate protein folding. The protein is Chaperonin GroEL of Staphylococcus epidermidis (strain ATCC 12228 / FDA PCI 1200).